The sequence spans 341 residues: MEHNGSFRVDSEFRYTLFPIVYSVIFILGVVANGYVLWVFANLYPSKKLNEIKIFMVNLTMADLLFLITLPLWIVYYYNEGDWILPNFLCNVAGCLFFINTYCSVAFLGVITYNRYQAVAYPIKTAQATTRKRGISLSLIIWVSIVATASYFLATDSTNLVPNKDGSGNITRCFEHYEPYSVPILVVHVFIAFCFFLVFFLIFYCNLVIIHTLLTQPMRQQRKAGVKRRALWMVCTVLAVFIICFVPHHVVQLPWTLAELGYQTNFHQAINDAHQITLCLLSTNCVLDPVIYCFLTKKFRKHLSEKFYSMRSSRKCSRATSDTCTEVIVPANQTPIVSLKN.

The Extracellular segment spans residues M1 to T16. A glycan (N-linked (GlcNAc...) asparagine) is linked at N4. The helical transmembrane segment at L17–W38 threads the bilayer. Over V39–I54 the chain is Cytoplasmic. Residues F55 to I74 traverse the membrane as a helical segment. The Extracellular segment spans residues V75 to N91. C90 and C173 are oxidised to a cystine. The chain crosses the membrane as a helical span at residues V92–Y113. Residues N114 to R133 lie on the Cytoplasmic side of the membrane. Residues G134–T155 traverse the membrane as a helical segment. Residues D156–I184 are Extracellular-facing. N169 is a glycosylation site (N-linked (GlcNAc...) asparagine). A helical membrane pass occupies residues L185–C205. Residues N206–M233 lie on the Cytoplasmic side of the membrane. The chain crosses the membrane as a helical span at residues V234 to P254. The Extracellular portion of the chain corresponds to W255 to Q275. The helical transmembrane segment at I276–L295 threads the bilayer. Topologically, residues T296–N341 are cytoplasmic.

Belongs to the G-protein coupled receptor 1 family. Interacts with ARRB1. As to expression, found in a range of organs. Expressed most strongly in spleen, followed by skeletal muscle, lung and small intestine. Expressed at moderate levels in the heart. Expressed at relatively low levels in the brain, liver and kidney.

It is found in the cell membrane. Functionally, receptor for platelet activating factor, a chemotactic phospholipid mediator that possesses potent inflammatory, smooth-muscle contractile and hypotensive activity. Seems to mediate its action via a G protein that activates a phosphatidylinositol-calcium second messenger system. This Mus musculus (Mouse) protein is Platelet-activating factor receptor (Ptafr).